Here is a 307-residue protein sequence, read N- to C-terminus: Ventral anterior homeobox 2 (307 aa).

Disordered stretches follow at residues 1–70, 155–175, and 197–254; these read MFDQ…DKLL, RTKQKKDQTKDTDKRSSSTSE, and PPPN…PSPR. Basic and acidic residues predominate over residues 25 to 38; that stretch reads CRDRGRESKSRTEV. Low complexity predominate over residues 46–62; the sequence is SSTDTPGTSASTPTSSS. Residues 103–162 constitute a DNA-binding region (homeobox); the sequence is PKRTRTSFTAEQLYRLELEFQRCQYVVGRERTELARQLNLSETQVKVWFQNRRTKQKKDQ. The span at 159-170 shows a compositional bias: basic and acidic residues; that stretch reads KKDQTKDTDKRS. The span at 202–249 shows a compositional bias: low complexity; that stretch reads LLAHPHPGNGSLLGSPSVSTSSGVSSSTTPPGAGSGTFGLSLSSLSGT.

It belongs to the EMX homeobox family. As to expression, expressed in the anterior neural keel and later in the preoptic area, optic stalk and ventral retina.

The protein localises to the nucleus. Its function is as follows. Transcription factor that may function in dorsoventral specification of the forebrain. Required for closure of the choroid fissure and together with vax1 is required for optic nerve differentiation and to limit retinal development to the optic cup. This Danio rerio (Zebrafish) protein is Ventral anterior homeobox 2 (vax2).